A 422-amino-acid polypeptide reads, in one-letter code: Enolase (422 aa).

Gln161 lines the (2R)-2-phosphoglycerate pocket. Glu203 acts as the Proton donor in catalysis. 3 residues coordinate Mg(2+): Asp240, Glu283, and Asp310. (2R)-2-phosphoglycerate-binding residues include Lys335, Arg364, Ser365, and Lys386. Lys335 acts as the Proton acceptor in catalysis.

This sequence belongs to the enolase family. Mg(2+) serves as cofactor.

It is found in the cytoplasm. It localises to the secreted. Its subcellular location is the cell surface. It catalyses the reaction (2R)-2-phosphoglycerate = phosphoenolpyruvate + H2O. It participates in carbohydrate degradation; glycolysis; pyruvate from D-glyceraldehyde 3-phosphate: step 4/5. In terms of biological role, catalyzes the reversible conversion of 2-phosphoglycerate (2-PG) into phosphoenolpyruvate (PEP). It is essential for the degradation of carbohydrates via glycolysis. This chain is Enolase, found in Deinococcus geothermalis (strain DSM 11300 / CIP 105573 / AG-3a).